We begin with the raw amino-acid sequence, 833 residues long: MTEEENLDMLLSLFAESEGQDLESPAAEEGEDNLDDLFDEDDDGEQYIEPEEAEEEKEEEEEEVSPGKSSSSDLNKSKEDLEAELKLMQEKMQKLQQQLEASQKTTPAQNKPAVQRQSTKSLTSPQAGVKTTPPTVRDSDGSPSNITAKLKNKQRTAHQPKAASSERQIPIGQSTNQPQPMRDGAKVNSMLKSPPLIKTPPTVRQPTPRLPVNQEVAVEKFSGLRLRKPRLSSIDIEQKMASRKLIRLSQLPDRLARDNLEDSDWVTFAVIINKITPQSKNNGKTFSIWKLNDLHNLEVNVSLFLFGSVHTDLWKTDTGTVIGILNPNPMKNKEGSNELSLTVDHPQKVLIIGEAMDFGTCKAKKKNGDSCTQLVNLYECQFCQYHVKAQYKKMSSKRAELQSSFTGSAPGKGRGRGSLKERLCQSDFHYGGMSSLACAPSMSAPQPKKQPTIQSALASIPTKKLVLNSGQVSGCSDDFRGLMSMPTPGALNIKRHLGQSKSSAVAGSSVQSVSASDLLKQQKEQHQQRMMARKKRAEEIQKRVLQSGGAPVASSRPNVSRGPLLSPKAASEGPKGSGSSLSGPAVPTLGRGFSEGEDIVFDMSPPSSKSLSATKLAAVRKLQAKGSVIVKEDPNAVKRKRANSGDITGRVERNIVKAKVTDENSASEEEEPAMKKRREQLEYIQSEEFQRILNAKSSNSWMMGEIEERAMQEYFEPLVQKEKMEEKMKSIREMKCRAVTCKTCKYTHFKPADRCVEEKHDYHWHDAVKRFFKCPCGQRKICLARMPHGACSHCGLFKWERDGMLKEKKGPKIGGELLMPRGEEQPKFLNSLK.

Residues 1-122 (MTEEENLDML…AVQRQSTKSL (122 aa)) form an N-terminal domain region. The segment covering 18–64 (EGQDLESPAAEEGEDNLDDLFDEDDDGEQYIEPEEAEEEKEEEEEEV) has biased composition (acidic residues). A disordered region spans residues 18–208 (EGQDLESPAA…TPPTVRQPTP (191 aa)). The stretch at 70–108 (SSSDLNKSKEDLEAELKLMQEKMQKLQQQLEASQKTTPA) forms a coiled coil. The segment covering 75–93 (NKSKEDLEAELKLMQEKMQ) has biased composition (basic and acidic residues). 2 stretches are compositionally biased toward polar residues: residues 115 to 126 (QRQSTKSLTSPQ) and 165 to 179 (SERQIPIGQSTNQPQ). Positions 202–360 (TVRQPTPRLP…IIGEAMDFGT (159 aa)) are OB-fold domain. Residues 361 to 386 (CKAKKKNGDSCTQLVNLYECQFCQYH) form a zinc finger-like 1 region. 2 stretches are compositionally biased toward low complexity: residues 502–516 (SSAVAGSSVQSVSAS) and 571–583 (SEGPKGSGSSLSG). Positions 502 to 589 (SSAVAGSSVQ…SLSGPAVPTL (88 aa)) are disordered. Zinc finger-like regions lie at residues 741 to 760 (CKTCKYTHFKPADRCVEEKH) and 774 to 794 (CPCGQRKICLARMPHGACSHC).

It belongs to the MCM10 family. As to quaternary structure, self-associates.

The protein resides in the nucleus. Acts as a replication initiation factor that brings together the MCM2-7 helicase and the DNA polymerase alpha/primase complex in order to initiate DNA replication. Additionally, plays a role in preventing DNA damage during replication. The polypeptide is Protein MCM10 homolog (mcm10) (Danio rerio (Zebrafish)).